An 89-amino-acid polypeptide reads, in one-letter code: Small ribosomal subunit protein uS15 (89 aa).

This sequence belongs to the universal ribosomal protein uS15 family. Part of the 30S ribosomal subunit. Forms a bridge to the 50S subunit in the 70S ribosome, contacting the 23S rRNA.

Functionally, one of the primary rRNA binding proteins, it binds directly to 16S rRNA where it helps nucleate assembly of the platform of the 30S subunit by binding and bridging several RNA helices of the 16S rRNA. Forms an intersubunit bridge (bridge B4) with the 23S rRNA of the 50S subunit in the ribosome. The sequence is that of Small ribosomal subunit protein uS15 from Chromohalobacter salexigens (strain ATCC BAA-138 / DSM 3043 / CIP 106854 / NCIMB 13768 / 1H11).